Reading from the N-terminus, the 472-residue chain is Aspartyl/glutamyl-tRNA(Asn/Gln) amidotransferase subunit B (472 aa).

This sequence belongs to the GatB/GatE family. GatB subfamily. In terms of assembly, heterotrimer of A, B and C subunits.

It carries out the reaction L-glutamyl-tRNA(Gln) + L-glutamine + ATP + H2O = L-glutaminyl-tRNA(Gln) + L-glutamate + ADP + phosphate + H(+). The enzyme catalyses L-aspartyl-tRNA(Asn) + L-glutamine + ATP + H2O = L-asparaginyl-tRNA(Asn) + L-glutamate + ADP + phosphate + 2 H(+). Its function is as follows. Allows the formation of correctly charged Asn-tRNA(Asn) or Gln-tRNA(Gln) through the transamidation of misacylated Asp-tRNA(Asn) or Glu-tRNA(Gln) in organisms which lack either or both of asparaginyl-tRNA or glutaminyl-tRNA synthetases. The reaction takes place in the presence of glutamine and ATP through an activated phospho-Asp-tRNA(Asn) or phospho-Glu-tRNA(Gln). The sequence is that of Aspartyl/glutamyl-tRNA(Asn/Gln) amidotransferase subunit B from Elusimicrobium minutum (strain Pei191).